Consider the following 469-residue polypeptide: Ribulose bisphosphate carboxylase large chain (469 aa).

At Lys5 the chain carries N6,N6,N6-trimethyllysine. The substrate site is built by Asn114 and Thr164. Lys166 acts as the Proton acceptor in catalysis. Position 168 (Lys168) interacts with substrate. Mg(2+)-binding residues include Lys192, Asp194, and Glu195. Lys192 bears the N6-carboxylysine mark. His285 serves as the catalytic Proton acceptor. The substrate site is built by Arg286, His318, and Ser370.

This sequence belongs to the RuBisCO large chain family. Type I subfamily. As to quaternary structure, heterohexadecamer of 8 large chains and 8 small chains; disulfide-linked. The disulfide link is formed within the large subunit homodimers. Requires Mg(2+) as cofactor. In terms of processing, the disulfide bond which can form in the large chain dimeric partners within the hexadecamer appears to be associated with oxidative stress and protein turnover.

It is found in the plastid. Its subcellular location is the chloroplast. It catalyses the reaction 2 (2R)-3-phosphoglycerate + 2 H(+) = D-ribulose 1,5-bisphosphate + CO2 + H2O. The enzyme catalyses D-ribulose 1,5-bisphosphate + O2 = 2-phosphoglycolate + (2R)-3-phosphoglycerate + 2 H(+). RuBisCO catalyzes two reactions: the carboxylation of D-ribulose 1,5-bisphosphate, the primary event in carbon dioxide fixation, as well as the oxidative fragmentation of the pentose substrate in the photorespiration process. Both reactions occur simultaneously and in competition at the same active site. This is Ribulose bisphosphate carboxylase large chain from Fleroya rubrostipulata (Mitragyna rubrostipulata).